A 244-amino-acid chain; its full sequence is Ribosomal RNA small subunit methyltransferase G (244 aa).

Residues Gly84, Phe89, 107–109, 135–136, and Arg154 each bind S-adenosyl-L-methionine; these read DST and AE.

It belongs to the methyltransferase superfamily. RNA methyltransferase RsmG family.

It is found in the cytoplasm. Functionally, specifically methylates the N7 position of a guanine in 16S rRNA. The chain is Ribosomal RNA small subunit methyltransferase G from Nostoc punctiforme (strain ATCC 29133 / PCC 73102).